The following is a 348-amino-acid chain: tRNA N6-adenosine threonylcarbamoyltransferase (348 aa).

Positions 111 and 115 each coordinate Fe cation. Residues 134 to 138, Asp167, Gly180, Asp184, and Asn280 contribute to the substrate site; that span reads LVSGG. Asp308 contributes to the Fe cation binding site.

This sequence belongs to the KAE1 / TsaD family. The cofactor is Fe(2+).

The protein resides in the cytoplasm. It catalyses the reaction L-threonylcarbamoyladenylate + adenosine(37) in tRNA = N(6)-L-threonylcarbamoyladenosine(37) in tRNA + AMP + H(+). Functionally, required for the formation of a threonylcarbamoyl group on adenosine at position 37 (t(6)A37) in tRNAs that read codons beginning with adenine. Is involved in the transfer of the threonylcarbamoyl moiety of threonylcarbamoyl-AMP (TC-AMP) to the N6 group of A37, together with TsaE and TsaB. TsaD likely plays a direct catalytic role in this reaction. The sequence is that of tRNA N6-adenosine threonylcarbamoyltransferase from Rippkaea orientalis (strain PCC 8801 / RF-1) (Cyanothece sp. (strain PCC 8801)).